Consider the following 43-residue polypeptide: Protein PsbN (43 aa).

The chain crosses the membrane as a helical span at residues 7 to 27 (FVVGILVALVLITAFAVYTAF).

It belongs to the PsbN family.

Its subcellular location is the cell inner membrane. Functionally, may play a role in photosystem I and II biogenesis. The sequence is that of Protein PsbN from Gloeobacter violaceus (strain ATCC 29082 / PCC 7421).